A 262-amino-acid chain; its full sequence is Light-harvesting complex-like protein 3 isotype 1, chloroplastic (262 aa).

The N-terminal 39 residues, 1-39 (MALFSPPISSSSLQNPNFIPKFSFSLLSSNRFSLLSVTR), are a transit peptide targeting the chloroplast. Transmembrane regions (helical) follow at residues 180 to 200 (AAMI…VGLV) and 202 to 222 (QMGN…VLFI).

As to quaternary structure, interacts with GGR. Forms homodimer, and heterodimer with LIL3.2. As to expression, expressed in photosynthetically active tissues (at protein level).

It localises to the plastid. It is found in the chloroplast thylakoid membrane. Light-harvesting-like protein required for biosynthesis of phytylated chlorophylls and alpha-tocopherol in green seedlings. Functions by anchoring geranylgeranyl reductase (GGR) in the thylakoid membrane, leading to the stabilization of GGR activity. Binds chlorophyll a in the thylakoid membrane. Plays a role in the regulation of chlorophyll biosynthesis under light stress and under standard growth conditions. This chain is Light-harvesting complex-like protein 3 isotype 1, chloroplastic (LIL3.1), found in Arabidopsis thaliana (Mouse-ear cress).